A 146-amino-acid chain; its full sequence is Large ribosomal subunit protein uL16 (146 aa).

This sequence belongs to the universal ribosomal protein uL16 family. Part of the 50S ribosomal subunit.

In terms of biological role, binds 23S rRNA and is also seen to make contacts with the A and possibly P site tRNAs. This chain is Large ribosomal subunit protein uL16, found in Lactobacillus helveticus (strain DPC 4571).